The primary structure comprises 262 residues: uncharacterized protein (262 aa).

This is an uncharacterized protein from Acanthamoeba polyphaga mimivirus (APMV).